The following is a 346-amino-acid chain: Protein RecA (346 aa).

ATP is bound at residue 67-74 (GPESSGKT).

This sequence belongs to the RecA family.

The protein resides in the cytoplasm. Functionally, can catalyze the hydrolysis of ATP in the presence of single-stranded DNA, the ATP-dependent uptake of single-stranded DNA by duplex DNA, and the ATP-dependent hybridization of homologous single-stranded DNAs. It interacts with LexA causing its activation and leading to its autocatalytic cleavage. This Mycobacterium marinum (strain ATCC BAA-535 / M) protein is Protein RecA.